A 984-amino-acid chain; its full sequence is Putative formate dehydrogenase SAR2393 (984 aa).

Positions 3–79 (EHLVVTLDGK…PMTVNTVNND (77 aa)) constitute a 2Fe-2S ferredoxin-type domain. The [2Fe-2S] cluster site is built by C37, C48, C51, and C63. A 4Fe-4S His(Cys)3-ligated-type domain is found at 79-119 (DVKDAQKEALDRILEKHMLYCTVCDYNNGDCEIHNTMDAWG). The [4Fe-4S] cluster site is built by H95, C99, C102, C109, C147, C150, C153, C157, C190, C193, C196, C200, C264, C267, C271, and C299. 4Fe-4S ferredoxin-type domains follow at residues 138 to 165 (PFYR…LNET) and 181 to 211 (NDVP…VNME). The segment at 252-984 (MRKERIKKTK…YVFPGNQVDK (733 aa)) is formate dehydrogenase. The region spanning 257-313 (IKKTKTVCTYCGVGCSFEVWTKDREILKVQPSHDSPANKIATCVKGKFSWGHINSDQ) is the 4Fe-4S Mo/W bis-MGD-type domain.

The protein in the C-terminal section; belongs to the prokaryotic molybdopterin-containing oxidoreductase family. Requires [2Fe-2S] cluster as cofactor. It depends on [4Fe-4S] cluster as a cofactor. Mo-bis(molybdopterin guanine dinucleotide) is required as a cofactor.

The enzyme catalyses formate + NAD(+) = CO2 + NADH. The chain is Putative formate dehydrogenase SAR2393 from Staphylococcus aureus (strain MRSA252).